Here is a 118-residue protein sequence, read N- to C-terminus: Beta-2-microglobulin (118 aa).

A signal peptide spans M1–A20. Residues P25–V112 enclose the Ig-like C1-type domain. C45 and C99 are disulfide-bonded.

Belongs to the beta-2-microglobulin family. As to quaternary structure, heterodimer of an alpha chain and a beta chain. Beta-2-microglobulin is the beta-chain of major histocompatibility complex class I molecules.

Its subcellular location is the secreted. In terms of biological role, component of the class I major histocompatibility complex (MHC). Involved in the presentation of peptide antigens to the immune system. This Ovis aries (Sheep) protein is Beta-2-microglobulin (B2M).